The following is a 27-amino-acid chain: 23S rRNA methylase leader peptide (27 aa).

In terms of biological role, this peptide is involved in the control mechanism of the synthesis of the erythromycin resistance protein. This Enterococcus faecalis (Streptococcus faecalis) protein is 23S rRNA methylase leader peptide (ermC).